The sequence spans 451 residues: Trigger factor (451 aa).

In terms of domain architecture, PPIase FKBP-type spans 163–248 (GDIIDMEYTV…IKALYVNILP (86 aa)).

It belongs to the FKBP-type PPIase family. Tig subfamily.

The protein resides in the cytoplasm. It catalyses the reaction [protein]-peptidylproline (omega=180) = [protein]-peptidylproline (omega=0). Involved in protein export. Acts as a chaperone by maintaining the newly synthesized protein in an open conformation. Functions as a peptidyl-prolyl cis-trans isomerase. The polypeptide is Trigger factor (Leptospira borgpetersenii serovar Hardjo-bovis (strain JB197)).